The following is a 481-amino-acid chain: MKVALISYEVYPFAKVGGLADVVGALPKYLEKASVKPIVIMPKHKVVEKNARNLDKVMEKISIPYLKTDETFDIYKTIVPKTNVPIYFVANEYYFSAENVYEGPDLAEQAIYFSAAVLETLKVLDLQMDVLHVNDWQTSLIPVYLKTLYKEDEFYAKTVTLLTIHNLGYQGIFDSKYMEFSGLPNYLYNIDGIEFYGKINFLKGGILYSDIINTVSPTYANEIQTKEYGEKLDGVLRLRSADLYGVLNGIDYDEYNPETDKRIFVNYSLDNIDKKYENKVRLQKELGLPEDRRIPMIGMITRLVDQKGLDILSEVLRYIVNYDIQFVILGTGDEKYEEMFKKAQQEFPKNVSANVKFDINLAQKIYAASDMFLMPSRYEPCGLGQMYSLRYGTIPIVRYTGGLADTVLEYDENKMTGNGFGFVEYDSSKLLKAVARALDFYKNKKVHWKKLIDNAMKTDLSWERSAKEYVKLYNKAMSKRI.

Lys15 serves as a coordination point for ADP-alpha-D-glucose.

It belongs to the glycosyltransferase 1 family. Bacterial/plant glycogen synthase subfamily.

The enzyme catalyses [(1-&gt;4)-alpha-D-glucosyl](n) + ADP-alpha-D-glucose = [(1-&gt;4)-alpha-D-glucosyl](n+1) + ADP + H(+). Its pathway is glycan biosynthesis; glycogen biosynthesis. Synthesizes alpha-1,4-glucan chains using ADP-glucose. The chain is Glycogen synthase from Thermosipho melanesiensis (strain DSM 12029 / CIP 104789 / BI429).